A 98-amino-acid polypeptide reads, in one-letter code: Small ribosomal subunit protein uS19 (98 aa).

Residues 77–98 (TRTYRGHAGGKAEKGGAAPKRK) are disordered.

Belongs to the universal ribosomal protein uS19 family.

In terms of biological role, protein S19 forms a complex with S13 that binds strongly to the 16S ribosomal RNA. The sequence is that of Small ribosomal subunit protein uS19 from Chlorobium phaeovibrioides (strain DSM 265 / 1930) (Prosthecochloris vibrioformis (strain DSM 265)).